Here is a 311-residue protein sequence, read N- to C-terminus: Porphobilinogen deaminase (311 aa).

Cys-241 carries the post-translational modification S-(dipyrrolylmethanemethyl)cysteine.

The protein belongs to the HMBS family. In terms of assembly, monomer. The cofactor is dipyrromethane.

It carries out the reaction 4 porphobilinogen + H2O = hydroxymethylbilane + 4 NH4(+). The protein operates within porphyrin-containing compound metabolism; protoporphyrin-IX biosynthesis; coproporphyrinogen-III from 5-aminolevulinate: step 2/4. In terms of biological role, tetrapolymerization of the monopyrrole PBG into the hydroxymethylbilane pre-uroporphyrinogen in several discrete steps. The sequence is that of Porphobilinogen deaminase from Campylobacter curvus (strain 525.92).